The primary structure comprises 377 residues: Chaperone protein DnaJ (377 aa).

Residues 5 to 70 (DYYEVLGVSR…DKKAAYDQFG (66 aa)) form the J domain. The segment at 133–211 (GLTKELRIPT…CHGDGRVEKS (79 aa)) adopts a CR-type zinc-finger fold. Cysteine 146, cysteine 149, cysteine 163, cysteine 166, cysteine 185, cysteine 188, cysteine 199, and cysteine 202 together coordinate Zn(2+). 4 CXXCXGXG motif repeats span residues 146–153 (CDLCEGSG), 163–170 (CGTCHGQG), 185–192 (CPTCHGRG), and 199–206 (CTKCHGDG).

It belongs to the DnaJ family. In terms of assembly, homodimer. Requires Zn(2+) as cofactor.

The protein localises to the cytoplasm. Functionally, participates actively in the response to hyperosmotic and heat shock by preventing the aggregation of stress-denatured proteins and by disaggregating proteins, also in an autonomous, DnaK-independent fashion. Unfolded proteins bind initially to DnaJ; upon interaction with the DnaJ-bound protein, DnaK hydrolyzes its bound ATP, resulting in the formation of a stable complex. GrpE releases ADP from DnaK; ATP binding to DnaK triggers the release of the substrate protein, thus completing the reaction cycle. Several rounds of ATP-dependent interactions between DnaJ, DnaK and GrpE are required for fully efficient folding. Also involved, together with DnaK and GrpE, in the DNA replication of plasmids through activation of initiation proteins. In Shewanella baltica (strain OS223), this protein is Chaperone protein DnaJ.